Consider the following 125-residue polypeptide: Evasin P672 (125 aa).

An N-terminal signal peptide occupies residues 1-21 (MAHKIAIGLVCVLYALHIMSA). Residues asparagine 35, asparagine 55, asparagine 65, asparagine 72, asparagine 78, asparagine 104, asparagine 112, and asparagine 118 are each glycosylated (N-linked (GlcNAc...) asparagine). 3 cysteine pairs are disulfide-bonded: cysteine 70-cysteine 110, cysteine 87-cysteine 115, and cysteine 105-cysteine 124.

It localises to the secreted. Salivary chemokine-binding protein which has chemokine-neutralizing activity and binds to host chemokines CCL1, CCL2, CCL3, CCL3L1, CCL7, CCL8, CCL11, CCL12, CCL13, CCL14, CCL15, CCL16, CCL18 and CCL23. Binds to CCL8 with 1:1 stoichiometry and disrupts CCL8 homodimer formation. The chain is Evasin P672 from Rhipicephalus pulchellus (Yellow backed tick).